The sequence spans 567 residues: Dihydroxy-acid dehydratase 1 (567 aa).

Cysteine 57 provides a ligand contact to [2Fe-2S] cluster. A Mg(2+)-binding site is contributed by aspartate 89. Cysteine 130 provides a ligand contact to [2Fe-2S] cluster. Residues aspartate 131 and lysine 132 each contribute to the Mg(2+) site. At lysine 132 the chain carries N6-carboxylysine. Cysteine 202 serves as a coordination point for [2Fe-2S] cluster. Glutamate 454 lines the Mg(2+) pocket. Serine 480 acts as the Proton acceptor in catalysis.

It belongs to the IlvD/Edd family. As to quaternary structure, homodimer. [2Fe-2S] cluster serves as cofactor. Mg(2+) is required as a cofactor.

It catalyses the reaction (2R)-2,3-dihydroxy-3-methylbutanoate = 3-methyl-2-oxobutanoate + H2O. It carries out the reaction (2R,3R)-2,3-dihydroxy-3-methylpentanoate = (S)-3-methyl-2-oxopentanoate + H2O. The protein operates within amino-acid biosynthesis; L-isoleucine biosynthesis; L-isoleucine from 2-oxobutanoate: step 3/4. It functions in the pathway amino-acid biosynthesis; L-valine biosynthesis; L-valine from pyruvate: step 3/4. Functionally, functions in the biosynthesis of branched-chain amino acids. Catalyzes the dehydration of (2R,3R)-2,3-dihydroxy-3-methylpentanoate (2,3-dihydroxy-3-methylvalerate) into 2-oxo-3-methylpentanoate (2-oxo-3-methylvalerate) and of (2R)-2,3-dihydroxy-3-methylbutanoate (2,3-dihydroxyisovalerate) into 2-oxo-3-methylbutanoate (2-oxoisovalerate), the penultimate precursor to L-isoleucine and L-valine, respectively. In Aromatoleum aromaticum (strain DSM 19018 / LMG 30748 / EbN1) (Azoarcus sp. (strain EbN1)), this protein is Dihydroxy-acid dehydratase 1.